We begin with the raw amino-acid sequence, 212 residues long: Agglutinin isolectin 1 (212 aa).

An N-terminal signal peptide occupies residues 1–26 (MKMMSTRALALGAAAVLAFAAATAQA). At Gln27 the chain carries Pyrrolidone carboxylic acid. Chitin-binding type-1 domains lie at 27-68 (QRCG…ACWT), 69-111 (SKRC…PCRA), 112-154 (DIKC…ACST), and 155-197 (DKPC…GCDG). Intrachain disulfides connect Cys29-Cys44, Cys38-Cys50, Cys43-Cys57, Cys61-Cys66, Cys72-Cys87, Cys81-Cys93, Cys86-Cys100, Cys104-Cys109, Cys115-Cys130, Cys124-Cys136, Cys129-Cys143, Cys147-Cys152, Cys158-Cys173, Cys167-Cys179, Cys172-Cys186, and Cys190-Cys195. 36-38 (MEC) lines the substrate pocket. 88–99 (SQYGYCGFGAEY) lines the substrate pocket. 140 to 141 (SE) is a substrate binding site. Residues 198–212 (VFAEAITANSTLLQE) constitute a propeptide that is removed on maturation.

In terms of assembly, homodimer, u-shaped.

N-acetyl-D-glucosamine / N-acetyl-D-neuraminic acid binding lectin. This chain is Agglutinin isolectin 1, found in Triticum aestivum (Wheat).